A 282-amino-acid polypeptide reads, in one-letter code: Polyamine aminopropyltransferase (282 aa).

Positions 11–239 constitute a PABS domain; sequence IEWYPRGYGV…SPWSFLVGVK (229 aa). Gln-36 lines the S-methyl-5'-thioadenosine pocket. Spermidine contacts are provided by His-67 and Asp-91. Residues Glu-111 and 142–143 each bind S-methyl-5'-thioadenosine; that span reads DG. Catalysis depends on Asp-160, which acts as the Proton acceptor. Position 160 to 163 (160 to 163) interacts with spermidine; the sequence is DSTD. Pro-167 provides a ligand contact to S-methyl-5'-thioadenosine.

The protein belongs to the spermidine/spermine synthase family. As to quaternary structure, homodimer or homotetramer.

The protein localises to the cytoplasm. The enzyme catalyses S-adenosyl 3-(methylsulfanyl)propylamine + putrescine = S-methyl-5'-thioadenosine + spermidine + H(+). Its pathway is amine and polyamine biosynthesis; spermidine biosynthesis; spermidine from putrescine: step 1/1. Its function is as follows. Catalyzes the irreversible transfer of a propylamine group from the amino donor S-adenosylmethioninamine (decarboxy-AdoMet) to putrescine (1,4-diaminobutane) to yield spermidine. The polypeptide is Polyamine aminopropyltransferase (Thermococcus onnurineus (strain NA1)).